The following is a 152-amino-acid chain: Lipoprotein signal peptidase (152 aa).

3 helical membrane-spanning segments follow: residues 5-25 (LFVL…FWIV), 61-81 (WFFV…LATH), and 84-104 (LNIW…GNFI). Catalysis depends on residues Asp114 and Asp130. Residues 125–145 (IFNVADSYLTVGVILLVICLW) form a helical membrane-spanning segment.

It belongs to the peptidase A8 family.

The protein localises to the cell membrane. It catalyses the reaction Release of signal peptides from bacterial membrane prolipoproteins. Hydrolyzes -Xaa-Yaa-Zaa-|-(S,diacylglyceryl)Cys-, in which Xaa is hydrophobic (preferably Leu), and Yaa (Ala or Ser) and Zaa (Gly or Ala) have small, neutral side chains.. The protein operates within protein modification; lipoprotein biosynthesis (signal peptide cleavage). Its function is as follows. This protein specifically catalyzes the removal of signal peptides from prolipoproteins. The polypeptide is Lipoprotein signal peptidase (Streptococcus pyogenes serotype M6 (strain ATCC BAA-946 / MGAS10394)).